The chain runs to 109 residues: Flagellar hook-basal body complex protein FliE (109 aa).

This sequence belongs to the FliE family.

Its subcellular location is the bacterial flagellum basal body. This is Flagellar hook-basal body complex protein FliE from Pseudomonas syringae pv. tomato (strain ATCC BAA-871 / DC3000).